The primary structure comprises 247 residues: Ribose-5-phosphate isomerase (247 aa).

It belongs to the ribose 5-phosphate isomerase family.

Its subcellular location is the cytoplasm. The enzyme catalyses aldehydo-D-ribose 5-phosphate = D-ribulose 5-phosphate. Its pathway is carbohydrate degradation; pentose phosphate pathway; D-ribose 5-phosphate from D-ribulose 5-phosphate (non-oxidative stage): step 1/1. In Meyerozyma guilliermondii (strain ATCC 6260 / CBS 566 / DSM 6381 / JCM 1539 / NBRC 10279 / NRRL Y-324) (Yeast), this protein is Ribose-5-phosphate isomerase (RKI1).